A 290-amino-acid polypeptide reads, in one-letter code: Syntaxin-2 (290 aa).

The Cytoplasmic segment spans residues 1-266 (MRDRLPDLTA…KYQSKARRKK (266 aa)). Phosphoserine is present on Ser-14. Residues 69 to 106 (EGKIKEELEDLNKEIKKTANRIRGKLKAIEQSCDQDEN) are a coiled coil. Residues 193–255 (LNEIESRHKD…EHAKEETKKA (63 aa)) form the t-SNARE coiled-coil homology domain. Residues 267–290 (WIIAAVVVAVIAVLALIIGLTVGK) form a helical; Anchor for type IV membrane protein membrane-spanning segment.

The protein belongs to the syntaxin family. In terms of assembly, interacts with SYT6 and SYT8; the interaction is Ca(2+)-dependent. Heart, spleen, liver, and testis.

It localises to the membrane. Essential for epithelial morphogenesis. May mediate Ca(2+)-regulation of exocytosis acrosomal reaction in sperm. The protein is Syntaxin-2 (Stx2) of Rattus norvegicus (Rat).